We begin with the raw amino-acid sequence, 158 residues long: tRNA (cytidine(34)-2'-O)-methyltransferase (158 aa).

G103, I123, and S131 together coordinate S-adenosyl-L-methionine.

The protein belongs to the class IV-like SAM-binding methyltransferase superfamily. RNA methyltransferase TrmH family. TrmL subfamily. As to quaternary structure, homodimer.

It localises to the cytoplasm. It catalyses the reaction cytidine(34) in tRNA + S-adenosyl-L-methionine = 2'-O-methylcytidine(34) in tRNA + S-adenosyl-L-homocysteine + H(+). It carries out the reaction 5-carboxymethylaminomethyluridine(34) in tRNA(Leu) + S-adenosyl-L-methionine = 5-carboxymethylaminomethyl-2'-O-methyluridine(34) in tRNA(Leu) + S-adenosyl-L-homocysteine + H(+). Functionally, methylates the ribose at the nucleotide 34 wobble position in the two leucyl isoacceptors tRNA(Leu)(CmAA) and tRNA(Leu)(cmnm5UmAA). Catalyzes the methyl transfer from S-adenosyl-L-methionine to the 2'-OH of the wobble nucleotide. This is tRNA (cytidine(34)-2'-O)-methyltransferase from Ancylobacter novellus (strain ATCC 8093 / DSM 506 / JCM 20403 / CCM 1077 / IAM 12100 / NBRC 12443 / NCIMB 10456) (Starkeya novella).